A 711-amino-acid polypeptide reads, in one-letter code: Polyribonucleotide nucleotidyltransferase (711 aa).

Mg(2+) is bound by residues Asp-486 and Asp-492. In terms of domain architecture, KH spans 553-612; the sequence is PRIHTIKISPDKIKDVIGKGGSVIRALTEETGTTIEIEDDGTVKIAATDGEKAKFAIRRI. Residues 622–690 form the S1 motif domain; the sequence is GRIYNGKVTR…RQGRVRLSIK (69 aa). Residues 690–711 are disordered; that stretch reads KEATEQTQPAAAPEAPAAEQGE. The span at 694-711 shows a compositional bias: low complexity; that stretch reads EQTQPAAAPEAPAAEQGE.

The protein belongs to the polyribonucleotide nucleotidyltransferase family. Component of the RNA degradosome, which is a multiprotein complex involved in RNA processing and mRNA degradation. Mg(2+) serves as cofactor.

It localises to the cytoplasm. The enzyme catalyses RNA(n+1) + phosphate = RNA(n) + a ribonucleoside 5'-diphosphate. Involved in mRNA degradation. Catalyzes the phosphorolysis of single-stranded polyribonucleotides processively in the 3'- to 5'-direction. This is Polyribonucleotide nucleotidyltransferase from Enterobacter sp. (strain 638).